Here is a 364-residue protein sequence, read N- to C-terminus: Lysophosphatidic acid receptor 1 (364 aa).

At 1–50 (MAAISTSIPVISQPQFTAMNEPQCFYNESIAFFYNRSGKHLATEWNTVSK) the chain is on the extracellular side. Cystine bridges form between Cys24-Cys190 and Cys188-Cys195. N-linked (GlcNAc...) asparagine glycosylation is found at Asn27 and Asn35. Lys39 is a binding site for a 1-acyl-sn-glycero-3-phosphate. A helical membrane pass occupies residues 51 to 75 (LVMGLGITVCIFIMLANLLVMVAIY). Over 76–83 (VNRRFHFP) the chain is Cytoplasmic. A helical membrane pass occupies residues 84-107 (IYYLMANLAAADFFAGLAYFYLMF). Residues 108–121 (NTGPNTRRLTVSTW) are Extracellular-facing. The chain crosses the membrane as a helical span at residues 122–144 (LLRQGLIDTSLTASVANLLAIAI). An a 1-acyl-sn-glycero-3-phosphate-binding site is contributed by 124 to 129 (RQGLID). The Cytoplasmic portion of the chain corresponds to 145–163 (ERHITVFRMQLHTRMSNRR). A helical membrane pass occupies residues 164 to 184 (VVVVIVVIWTMAIVMGAIPSV). Over 185-204 (GWNCICDIENCSNMAPLYSD) the chain is Extracellular. A helical transmembrane segment spans residues 205-225 (SYLVFWAIFNLVTFVVMVVLY). An a 1-acyl-sn-glycero-3-phosphate-binding site is contributed by Trp210. Residues 226 to 255 (AHIFGYVRQRTMRMSRHSSGPRRNRDTMMS) lie on the Cytoplasmic side of the membrane. The chain crosses the membrane as a helical span at residues 256 to 280 (LLKTVVIVLGAFIICWTPGLVLLLL). The Extracellular portion of the chain corresponds to 281-294 (DVCCPQCDVLAYEK). Cys284 and Cys287 are disulfide-bonded. The helical transmembrane segment at 295-315 (FFLLLAEFNSAMNPIIYSYRD) threads the bilayer. The Cytoplasmic segment spans residues 316–364 (KEMSATFRQILCCQRSENPTGPTEGSDRSASSLNHTILAGVHSNDHSVV). Residue Ser341 is modified to Phosphoserine. Thr351 is modified (phosphothreonine).

Belongs to the G-protein coupled receptor 1 family. In terms of assembly, interacts with RALA and GRK2. Interacts with GNAQ and GNA13. Interacts with CD14; the interaction is enhanced by exposure to bacterial lipopolysaccharide (LPS). N-glycosylated. In terms of tissue distribution, expressed in many adult organs, including brain, heart, colon, small intestine, placenta, prostate, ovary, pancreas, testes, spleen, skeletal muscle, and kidney. Little or no expression in liver, lung, thymus, or peripheral blood leukocytes. Detected in lung fibroblasts from bronchoalveolar fluid from patients with idiopathic pulmonary fibrosis. Detected in bone marrow-derived mesenchymal stem cells.

The protein resides in the cell surface. It is found in the cell membrane. Its subcellular location is the endosome. Functionally, receptor for lysophosphatidic acid (LPA). Plays a role in the reorganization of the actin cytoskeleton, cell migration, differentiation and proliferation, and thereby contributes to the responses to tissue damage and infectious agents. Activates downstream signaling cascades via the G(i)/G(o), G(12)/G(13), and G(q) families of heteromeric G proteins. Signaling inhibits adenylyl cyclase activity and decreases cellular cAMP levels. Signaling triggers an increase of cytoplasmic Ca(2+) levels. Activates RALA; this leads to the activation of phospholipase C (PLC) and the formation of inositol 1,4,5-trisphosphate. Signaling mediates activation of down-stream MAP kinases. Contributes to the regulation of cell shape. Promotes Rho-dependent reorganization of the actin cytoskeleton in neuronal cells and neurite retraction. Promotes the activation of Rho and the formation of actin stress fibers. Promotes formation of lamellipodia at the leading edge of migrating cells via activation of RAC1. Through its function as LPA receptor, plays a role in chemotaxis and cell migration, including responses to injury and wounding. Plays a role in triggering inflammation in response to bacterial lipopolysaccharide (LPS) via its interaction with CD14. Promotes cell proliferation in response to LPA. Inhibits the intracellular ciliogenesis pathway in response to LPA and through AKT1 activation. Required for normal skeleton development. May play a role in osteoblast differentiation. Required for normal brain development. Required for normal proliferation, survival and maturation of newly formed neurons in the adult dentate gyrus. Plays a role in pain perception and in the initiation of neuropathic pain. This chain is Lysophosphatidic acid receptor 1 (LPAR1), found in Homo sapiens (Human).